A 621-amino-acid chain; its full sequence is C4-dicarboxylate transport sensor protein DctB (621 aa).

At M1 to S26 the chain is on the cytoplasmic side. A helical membrane pass occupies residues W27–A45. At R46–Q320 the chain is on the periplasmic side. Residues L321–L338 traverse the membrane as a helical segment. The Cytoplasmic portion of the chain corresponds to R339–A621. In terms of domain architecture, Histidine kinase spans G412–A621. The residue at position 415 (H415) is a Phosphohistidine; by autocatalysis.

Autophosphorylated.

Its subcellular location is the cell inner membrane. It carries out the reaction ATP + protein L-histidine = ADP + protein N-phospho-L-histidine.. Functionally, member of the two-component regulatory system DctB/DctD involved in the transport of C4-dicarboxylates. DctB functions as a membrane-associated protein kinase that phosphorylates DctD in response to environmental signals. This Rhizobium meliloti (strain 1021) (Ensifer meliloti) protein is C4-dicarboxylate transport sensor protein DctB (dctB).